A 141-amino-acid polypeptide reads, in one-letter code: Hemoglobin subunit alpha (141 aa).

In terms of domain architecture, Globin spans 1–141; sequence VLSAADKGNV…VSTVLTSKYR (141 aa). S3 carries the post-translational modification Phosphoserine. N6-succinyllysine is present on residues K7 and K11. K16 is subject to N6-acetyllysine; alternate. At K16 the chain carries N6-succinyllysine; alternate. Y24 is subject to Phosphotyrosine. Position 35 is a phosphoserine (S35). N6-succinyllysine is present on K40. H58 contributes to the O2 binding site. H87 is a heme b binding site. Position 102 is a phosphoserine (S102). At T108 the chain carries Phosphothreonine. 2 positions are modified to phosphoserine: S124 and S131. Phosphothreonine occurs at positions 134 and 137. S138 carries the phosphoserine modification.

It belongs to the globin family. Heterotetramer of two alpha chains and two beta chains. Red blood cells.

Its function is as follows. Involved in oxygen transport from the lung to the various peripheral tissues. In terms of biological role, hemopressin acts as an antagonist peptide of the cannabinoid receptor CNR1. Hemopressin-binding efficiently blocks cannabinoid receptor CNR1 and subsequent signaling. The polypeptide is Hemoglobin subunit alpha (HBA) (Macrotus californicus (Californian leaf-nosed bat)).